The chain runs to 291 residues: Tyramine--L-glutamate ligase (291 aa).

Positions 104–274 constitute an ATP-grasp domain; that stretch reads KYPVKNLGCS…LAELLIKNAN (171 aa). 131–176 serves as a coordination point for ATP; that stretch reads KDYVKTPKTFKPKKYVIKKIDGCGGKFNLFDENFLIQEFVEGESLS. Residues Asp236, Glu247, and Asn249 each coordinate Mg(2+). Residues Asp236, Glu247, and Asn249 each contribute to the Mn(2+) site.

Mg(2+) is required as a cofactor. It depends on Mn(2+) as a cofactor.

The catalysed reaction is tyramine + L-glutamate + ATP = gamma-L-glutamyltyramine + ADP + phosphate + H(+). It participates in cofactor biosynthesis; methanofuran biosynthesis. In terms of biological role, catalyzes the formation of an amide bond between tyramine and the gamma carboxy group of L-glutamate. The enzyme also accepts phenylethylamine in vitro. The polypeptide is Tyramine--L-glutamate ligase (Methanocaldococcus fervens (strain DSM 4213 / JCM 15782 / AG86) (Methanococcus fervens)).